Consider the following 188-residue polypeptide: Trafficking protein particle complex subunit 5 (188 aa).

Phosphoserine is present on Ser-10.

Belongs to the TRAPP small subunits family. BET3 subfamily. Component of the multisubunit TRAPP (transport protein particle) complex, which includes at least TRAPPC2, TRAPPC2L, TRAPPC3, TRAPPC3L, TRAPPC4, TRAPPC5, TRAPPC8, TRAPPC9, TRAPPC10, TRAPPC11 and TRAPPC12.

The protein resides in the golgi apparatus. It localises to the cis-Golgi network. The protein localises to the endoplasmic reticulum. In terms of biological role, may play a role in vesicular transport from endoplasmic reticulum to Golgi. The protein is Trafficking protein particle complex subunit 5 (TRAPPC5) of Homo sapiens (Human).